The sequence spans 639 residues: Serine/threonine-protein phosphatase 2B catalytic subunit A1 (639 aa).

Aspartate 120, histidine 122, and aspartate 148 together coordinate Fe cation. Zn(2+) is bound by residues aspartate 148 and asparagine 180. Histidine 181 serves as the catalytic Proton donor. 2 residues coordinate Zn(2+): histidine 229 and histidine 311. Positions 494 to 503 are enriched in basic and acidic residues; it reads KSDIENERLP. Residues 494–602 are disordered; that stretch reads KSDIENERLP…PSTRRRSLEN (109 aa). Low complexity-rich tracts occupy residues 515-527 and 546-572; these read ASPS…PATP and TPIS…GGPP.

This sequence belongs to the PPP phosphatase family. PP-2B subfamily. In terms of assembly, composed of two components (A and B), the A component is the catalytic subunit and the B component confers calcium sensitivity. Fe(3+) serves as cofactor. Zn(2+) is required as a cofactor.

The catalysed reaction is O-phospho-L-seryl-[protein] + H2O = L-seryl-[protein] + phosphate. The enzyme catalyses O-phospho-L-threonyl-[protein] + H2O = L-threonyl-[protein] + phosphate. In terms of biological role, calcium-dependent, calmodulin-stimulated protein phosphatase. This subunit may have a role in the calmodulin activation of calcineurin. This Cryptococcus neoformans var. grubii serotype A (strain H99 / ATCC 208821 / CBS 10515 / FGSC 9487) (Filobasidiella neoformans var. grubii) protein is Serine/threonine-protein phosphatase 2B catalytic subunit A1 (CNA1).